Consider the following 364-residue polypeptide: Chorismate synthase (364 aa).

A disordered region spans residues 41–60 (MQHDLDRRRPGTSRYTTARR). NADP(+) contacts are provided by arginine 48 and arginine 54. Residues 125-127 (RSS), 238-239 (NA), glycine 278, 293-297 (KPTSS), and arginine 319 contribute to the FMN site.

Belongs to the chorismate synthase family. In terms of assembly, homotetramer. The cofactor is FMNH2.

The catalysed reaction is 5-O-(1-carboxyvinyl)-3-phosphoshikimate = chorismate + phosphate. It functions in the pathway metabolic intermediate biosynthesis; chorismate biosynthesis; chorismate from D-erythrose 4-phosphate and phosphoenolpyruvate: step 7/7. Its function is as follows. Catalyzes the anti-1,4-elimination of the C-3 phosphate and the C-6 proR hydrogen from 5-enolpyruvylshikimate-3-phosphate (EPSP) to yield chorismate, which is the branch point compound that serves as the starting substrate for the three terminal pathways of aromatic amino acid biosynthesis. This reaction introduces a second double bond into the aromatic ring system. This Shewanella baltica (strain OS185) protein is Chorismate synthase.